The primary structure comprises 580 residues: Amino-acid acetyltransferase, mitochondrial (580 aa).

An N-acetyltransferase domain is found at 403–560; the sequence is LTMQNLFDDK…NPRHKNGVVN (158 aa).

It belongs to the acetyltransferase family.

Its subcellular location is the mitochondrion. It carries out the reaction L-glutamate + acetyl-CoA = N-acetyl-L-glutamate + CoA + H(+). The protein operates within amino-acid biosynthesis; L-arginine biosynthesis; N(2)-acetyl-L-ornithine from L-glutamate: step 1/4. Functionally, N-acetylglutamate synthase involved in arginine biosynthesis. The sequence is that of Amino-acid acetyltransferase, mitochondrial (ARG2) from Candida dubliniensis (strain CD36 / ATCC MYA-646 / CBS 7987 / NCPF 3949 / NRRL Y-17841) (Yeast).